A 197-amino-acid polypeptide reads, in one-letter code: Probable proteasome subunit beta type-4 (197 aa).

It belongs to the peptidase T1B family. In terms of assembly, the 26S proteasome consists of a 20S proteasome core and two 19S regulatory subunits. The 20S proteasome core is composed of 28 subunits that are arranged in four stacked rings, resulting in a barrel-shaped structure. The two end rings are each formed by seven alpha subunits, and the two central rings are each formed by seven beta subunits. The catalytic chamber with the active sites is on the inside of the barrel.

It is found in the cytoplasm. The protein resides in the nucleus. Non-catalytic component of the proteasome which degrades poly-ubiquitinated proteins in the cytoplasm and in the nucleus. It is essential for the regulated turnover of proteins and for the removal of misfolded proteins. The proteasome is a multicatalytic proteinase complex that is characterized by its ability to cleave peptides with Arg, Phe, Tyr, Leu, and Glu adjacent to the leaving group at neutral or slightly basic pH. It has an ATP-dependent proteolytic activity. The chain is Probable proteasome subunit beta type-4 (PRE1) from Encephalitozoon cuniculi (strain GB-M1) (Microsporidian parasite).